The following is a 268-amino-acid chain: Non-homologous end joining protein Ku (268 aa).

One can recognise a Ku domain in the interval 13–175; it reads VSLVTCPVTM…TLHDGNAVRN (163 aa). Residues 174 to 194 are disordered; it reads RNGGHPAARTRPASEAESADS.

The protein belongs to the prokaryotic Ku family. As to quaternary structure, homodimer. Interacts with LigD.

Its function is as follows. With LigD forms a non-homologous end joining (NHEJ) DNA repair enzyme, which repairs dsDNA breaks with reduced fidelity. Binds linear dsDNA with 5'- and 3'- overhangs but not closed circular dsDNA nor ssDNA. Recruits and stimulates the ligase activity of LigD. The sequence is that of Non-homologous end joining protein Ku from Gluconacetobacter diazotrophicus (strain ATCC 49037 / DSM 5601 / CCUG 37298 / CIP 103539 / LMG 7603 / PAl5).